The chain runs to 254 residues: Pyruvate dehydrogenase complex repressor (254 aa).

The HTH gntR-type domain occupies 9–77 (PKLSDVIEQQ…QGGGTFVQSS (69 aa)). Residues 37–56 (ERELAKQFDVSRPSLREAIQ) constitute a DNA-binding region (H-T-H motif).

Functionally, transcriptional repressor for the pyruvate dehydrogenase complex genes aceEF and lpd. The protein is Pyruvate dehydrogenase complex repressor (pdhR) of Escherichia coli O6:H1 (strain CFT073 / ATCC 700928 / UPEC).